The sequence spans 468 residues: 3-isopropylmalate dehydratase large subunit (468 aa).

Positions 347, 407, and 410 each coordinate [4Fe-4S] cluster.

Belongs to the aconitase/IPM isomerase family. LeuC type 1 subfamily. Heterodimer of LeuC and LeuD. It depends on [4Fe-4S] cluster as a cofactor.

The enzyme catalyses (2R,3S)-3-isopropylmalate = (2S)-2-isopropylmalate. It functions in the pathway amino-acid biosynthesis; L-leucine biosynthesis; L-leucine from 3-methyl-2-oxobutanoate: step 2/4. Catalyzes the isomerization between 2-isopropylmalate and 3-isopropylmalate, via the formation of 2-isopropylmaleate. The sequence is that of 3-isopropylmalate dehydratase large subunit from Prochlorococcus marinus (strain SARG / CCMP1375 / SS120).